We begin with the raw amino-acid sequence, 151 residues long: NADH-quinone oxidoreductase subunit I 2 (151 aa).

4Fe-4S ferredoxin-type domains lie at 49–82 (PRLNINPDNGETLCISCNLCALACPENLIVVTSE) and 93–122 (VTFTYDTSRCMFCGLCEDACPVDALELTQD). C62, C65, C68, C72, C102, C105, C108, and C112 together coordinate [4Fe-4S] cluster.

The protein belongs to the complex I 23 kDa subunit family. In terms of assembly, NDH-1 is composed of 14 different subunits. Subunits NuoA, H, J, K, L, M, N constitute the membrane sector of the complex. [4Fe-4S] cluster is required as a cofactor.

It localises to the cell inner membrane. The catalysed reaction is a quinone + NADH + 5 H(+)(in) = a quinol + NAD(+) + 4 H(+)(out). Functionally, NDH-1 shuttles electrons from NADH, via FMN and iron-sulfur (Fe-S) centers, to quinones in the respiratory chain. The immediate electron acceptor for the enzyme in this species is believed to be ubiquinone. Couples the redox reaction to proton translocation (for every two electrons transferred, four hydrogen ions are translocated across the cytoplasmic membrane), and thus conserves the redox energy in a proton gradient. The sequence is that of NADH-quinone oxidoreductase subunit I 2 from Solibacter usitatus (strain Ellin6076).